Here is a 192-residue protein sequence, read N- to C-terminus: Urease accessory protein UreE (192 aa).

The disordered stretch occupies residues 170–192 (EHHGHSHSHSHDHVHDEKCGHKH). Residues 178 to 192 (HSHDHVHDEKCGHKH) are compositionally biased toward basic and acidic residues.

It belongs to the UreE family.

Its subcellular location is the cytoplasm. Its function is as follows. Involved in urease metallocenter assembly. Binds nickel. Probably functions as a nickel donor during metallocenter assembly. The polypeptide is Urease accessory protein UreE (Cupriavidus necator (strain ATCC 17699 / DSM 428 / KCTC 22496 / NCIMB 10442 / H16 / Stanier 337) (Ralstonia eutropha)).